The following is a 356-amino-acid chain: Histidinol-phosphate aminotransferase (356 aa).

An N6-(pyridoxal phosphate)lysine modification is found at lysine 214.

Belongs to the class-II pyridoxal-phosphate-dependent aminotransferase family. Histidinol-phosphate aminotransferase subfamily. As to quaternary structure, homodimer. It depends on pyridoxal 5'-phosphate as a cofactor.

The enzyme catalyses L-histidinol phosphate + 2-oxoglutarate = 3-(imidazol-4-yl)-2-oxopropyl phosphate + L-glutamate. It functions in the pathway amino-acid biosynthesis; L-histidine biosynthesis; L-histidine from 5-phospho-alpha-D-ribose 1-diphosphate: step 7/9. The polypeptide is Histidinol-phosphate aminotransferase (Escherichia coli O6:K15:H31 (strain 536 / UPEC)).